Here is an 87-residue protein sequence, read N- to C-terminus: Small ribosomal subunit protein uS15c (87 aa).

The protein belongs to the universal ribosomal protein uS15 family. Part of the 30S ribosomal subunit.

It is found in the plastid. The protein resides in the chloroplast. This chain is Small ribosomal subunit protein uS15c (rps15), found in Nymphaea alba (White water-lily).